Here is a 316-residue protein sequence, read N- to C-terminus: Ribosomal protein L11 methyltransferase (316 aa).

S-adenosyl-L-methionine is bound by residues Thr-162, Gly-183, Asp-205, and Asn-248.

It belongs to the methyltransferase superfamily. PrmA family.

It is found in the cytoplasm. The catalysed reaction is L-lysyl-[protein] + 3 S-adenosyl-L-methionine = N(6),N(6),N(6)-trimethyl-L-lysyl-[protein] + 3 S-adenosyl-L-homocysteine + 3 H(+). Methylates ribosomal protein L11. The sequence is that of Ribosomal protein L11 methyltransferase from Levilactobacillus brevis (strain ATCC 367 / BCRC 12310 / CIP 105137 / JCM 1170 / LMG 11437 / NCIMB 947 / NCTC 947) (Lactobacillus brevis).